A 152-amino-acid polypeptide reads, in one-letter code: Deoxyuridine 5'-triphosphate nucleotidohydrolase (152 aa).

Substrate-binding positions include 71-73 (RSG), Asn-84, 88-90 (LID), and Met-98.

This sequence belongs to the dUTPase family. Requires Mg(2+) as cofactor.

The catalysed reaction is dUTP + H2O = dUMP + diphosphate + H(+). Its pathway is pyrimidine metabolism; dUMP biosynthesis; dUMP from dCTP (dUTP route): step 2/2. This enzyme is involved in nucleotide metabolism: it produces dUMP, the immediate precursor of thymidine nucleotides and it decreases the intracellular concentration of dUTP so that uracil cannot be incorporated into DNA. This Shewanella halifaxensis (strain HAW-EB4) protein is Deoxyuridine 5'-triphosphate nucleotidohydrolase.